A 290-amino-acid polypeptide reads, in one-letter code: Bifunctional protein FolD 1 (290 aa).

NADP(+)-binding positions include 172-174 (GAS) and isoleucine 238.

The protein belongs to the tetrahydrofolate dehydrogenase/cyclohydrolase family. In terms of assembly, homodimer.

The catalysed reaction is (6R)-5,10-methylene-5,6,7,8-tetrahydrofolate + NADP(+) = (6R)-5,10-methenyltetrahydrofolate + NADPH. It catalyses the reaction (6R)-5,10-methenyltetrahydrofolate + H2O = (6R)-10-formyltetrahydrofolate + H(+). The protein operates within one-carbon metabolism; tetrahydrofolate interconversion. Functionally, catalyzes the oxidation of 5,10-methylenetetrahydrofolate to 5,10-methenyltetrahydrofolate and then the hydrolysis of 5,10-methenyltetrahydrofolate to 10-formyltetrahydrofolate. This is Bifunctional protein FolD 1 from Pseudomonas putida (strain GB-1).